A 126-amino-acid polypeptide reads, in one-letter code: Translation initiation factor 5A (126 aa).

The residue at position 36 (Lys-36) is a Hypusine.

It belongs to the eIF-5A family.

The protein resides in the cytoplasm. Functions by promoting the formation of the first peptide bond. This is Translation initiation factor 5A from Haloarcula marismortui (strain ATCC 43049 / DSM 3752 / JCM 8966 / VKM B-1809) (Halobacterium marismortui).